The following is a 553-amino-acid chain: CTP synthase (553 aa).

Residues 1 to 270 (MTKYVFVTGG…DRLICEELRL (270 aa)) are amidoligase domain. S13 contributes to the CTP binding site. S13 serves as a coordination point for UTP. ATP contacts are provided by residues 14–19 (SLGKGI) and D71. Residues D71 and E144 each coordinate Mg(2+). Residues 151–153 (DIE), 191–196 (KTKPTQ), and K227 each bind CTP. UTP contacts are provided by residues 191 to 196 (KTKPTQ) and K227. The region spanning 295–547 (TIGMVGKYVD…VQAALACQQT (253 aa)) is the Glutamine amidotransferase type-1 domain. G356 contacts L-glutamine. Residue C383 is the Nucleophile; for glutamine hydrolysis of the active site. Residues 384 to 387 (LGMQ), E407, and R473 each bind L-glutamine. Active-site residues include H520 and E522.

Belongs to the CTP synthase family. As to quaternary structure, homotetramer.

The catalysed reaction is UTP + L-glutamine + ATP + H2O = CTP + L-glutamate + ADP + phosphate + 2 H(+). It catalyses the reaction L-glutamine + H2O = L-glutamate + NH4(+). It carries out the reaction UTP + NH4(+) + ATP = CTP + ADP + phosphate + 2 H(+). The protein operates within pyrimidine metabolism; CTP biosynthesis via de novo pathway; CTP from UDP: step 2/2. With respect to regulation, allosterically activated by GTP, when glutamine is the substrate; GTP has no effect on the reaction when ammonia is the substrate. The allosteric effector GTP functions by stabilizing the protein conformation that binds the tetrahedral intermediate(s) formed during glutamine hydrolysis. Inhibited by the product CTP, via allosteric rather than competitive inhibition. Functionally, catalyzes the ATP-dependent amination of UTP to CTP with either L-glutamine or ammonia as the source of nitrogen. Regulates intracellular CTP levels through interactions with the four ribonucleotide triphosphates. The polypeptide is CTP synthase (Burkholderia mallei (strain NCTC 10229)).